The primary structure comprises 336 residues: UDP-3-O-acylglucosamine N-acyltransferase (336 aa).

The active-site Proton acceptor is H237.

The protein belongs to the transferase hexapeptide repeat family. LpxD subfamily. In terms of assembly, homotrimer.

It catalyses the reaction a UDP-3-O-[(3R)-3-hydroxyacyl]-alpha-D-glucosamine + a (3R)-hydroxyacyl-[ACP] = a UDP-2-N,3-O-bis[(3R)-3-hydroxyacyl]-alpha-D-glucosamine + holo-[ACP] + H(+). The protein operates within bacterial outer membrane biogenesis; LPS lipid A biosynthesis. Functionally, catalyzes the N-acylation of UDP-3-O-acylglucosamine using 3-hydroxyacyl-ACP as the acyl donor. Is involved in the biosynthesis of lipid A, a phosphorylated glycolipid that anchors the lipopolysaccharide to the outer membrane of the cell. The chain is UDP-3-O-acylglucosamine N-acyltransferase from Alcanivorax borkumensis (strain ATCC 700651 / DSM 11573 / NCIMB 13689 / SK2).